The primary structure comprises 113 residues: Probable 4-amino-4-deoxy-L-arabinose-phosphoundecaprenol flippase subunit ArnE (113 aa).

Transmembrane regions (helical) follow at residues 37–57, 62–82, and 91–111; these read SALKWLIGAVILLAVGMLFWL, ILPLGIAYPMLSINFIMVTLA, and AGIKHWSGVVFIMLGILLMSL. An EamA domain is found at 45–111; that stretch reads AVILLAVGML…IMLGILLMSL (67 aa).

It belongs to the ArnE family. Heterodimer of ArnE and ArnF.

It is found in the cell inner membrane. Its pathway is bacterial outer membrane biogenesis; lipopolysaccharide biosynthesis. In terms of biological role, translocates 4-amino-4-deoxy-L-arabinose-phosphoundecaprenol (alpha-L-Ara4N-phosphoundecaprenol) from the cytoplasmic to the periplasmic side of the inner membrane. This chain is Probable 4-amino-4-deoxy-L-arabinose-phosphoundecaprenol flippase subunit ArnE, found in Photorhabdus laumondii subsp. laumondii (strain DSM 15139 / CIP 105565 / TT01) (Photorhabdus luminescens subsp. laumondii).